Reading from the N-terminus, the 398-residue chain is UDP-N-acetylglucosamine--N-acetylmuramyl-(pentapeptide) pyrophosphoryl-undecaprenol N-acetylglucosamine transferase (398 aa).

UDP-N-acetyl-alpha-D-glucosamine is bound by residues 15–17 (TGG), Asn-125, Arg-168, Ser-196, and Gln-297.

It belongs to the glycosyltransferase 28 family. MurG subfamily.

It localises to the cell inner membrane. The enzyme catalyses di-trans,octa-cis-undecaprenyl diphospho-N-acetyl-alpha-D-muramoyl-L-alanyl-D-glutamyl-meso-2,6-diaminopimeloyl-D-alanyl-D-alanine + UDP-N-acetyl-alpha-D-glucosamine = di-trans,octa-cis-undecaprenyl diphospho-[N-acetyl-alpha-D-glucosaminyl-(1-&gt;4)]-N-acetyl-alpha-D-muramoyl-L-alanyl-D-glutamyl-meso-2,6-diaminopimeloyl-D-alanyl-D-alanine + UDP + H(+). It participates in cell wall biogenesis; peptidoglycan biosynthesis. In terms of biological role, cell wall formation. Catalyzes the transfer of a GlcNAc subunit on undecaprenyl-pyrophosphoryl-MurNAc-pentapeptide (lipid intermediate I) to form undecaprenyl-pyrophosphoryl-MurNAc-(pentapeptide)GlcNAc (lipid intermediate II). This Erythrobacter litoralis (strain HTCC2594) protein is UDP-N-acetylglucosamine--N-acetylmuramyl-(pentapeptide) pyrophosphoryl-undecaprenol N-acetylglucosamine transferase.